Reading from the N-terminus, the 392-residue chain is MRRIVCPPVLFLSASLLTGCDFSGIFASIQSEVPLKIPSIRGVVTGLVKCNNKLYACAGQLWEKDASKSEGKWTAVNFLPGKKITSIVSKGACVYACVSGEGVYTYTSNGAGRTGGTTTPSTVLGKTNGAIRIGGSDNPFLQMPCELSSGSSGGGGGGSGSSSDGGIKNGSDENVLGSGTGYVVTTKAVYTKSNSSGTSCTYTKDGTFTATTSPILGCTSDGKGCFYVLDGTDVHCRTVQASGGGNGAHCAVASGSATSCKVAHTVTNPLCIAHVKNGQTEFLLIGGSQGYKEIKLETGSGSGTGCLKAENVRGPEQWGEDSVTPKDRVSQYEGTIGRFAISDIYTVESTSGAGGTNGGTNKPDVYVVVGDSQDGYTGLWRFDAQKKEWNRE.

The N-terminal stretch at 1–19 (MRRIVCPPVLFLSASLLTG) is a signal peptide. Residue Cys20 is the site of N-palmitoyl cysteine attachment. Residue Cys20 is the site of S-diacylglycerol cysteine attachment. The segment at 148–173 (SSGSSGGGGGGSGSSSDGGIKNGSDE) is disordered. Residues 151–160 (SSGGGGGGSG) show a composition bias toward gly residues.

The protein belongs to the TP013X lipoprotein family.

It is found in the cell membrane. This is an uncharacterized protein from Treponema pallidum (strain Nichols).